The chain runs to 263 residues: Endonuclease 8 (263 aa).

Catalysis depends on Pro-2, which acts as the Schiff-base intermediate with DNA. The active-site Proton donor is the Glu-3. Lys-53 serves as the catalytic Proton donor; for beta-elimination activity. Residues Gln-70, Arg-125, and Asn-169 each coordinate DNA. The FPG-type zinc-finger motif lies at 229–263; the sequence is KVFHRDGEACERCGGIIEKTTLSSRPFYWCPHCQK. Residue Arg-253 is the Proton donor; for delta-elimination activity of the active site.

This sequence belongs to the FPG family. The cofactor is Zn(2+).

It carries out the reaction 2'-deoxyribonucleotide-(2'-deoxyribose 5'-phosphate)-2'-deoxyribonucleotide-DNA = a 3'-end 2'-deoxyribonucleotide-(2,3-dehydro-2,3-deoxyribose 5'-phosphate)-DNA + a 5'-end 5'-phospho-2'-deoxyribonucleoside-DNA + H(+). Functionally, involved in base excision repair of DNA damaged by oxidation or by mutagenic agents. Acts as a DNA glycosylase that recognizes and removes damaged bases. Has a preference for oxidized pyrimidines, such as thymine glycol, 5,6-dihydrouracil and 5,6-dihydrothymine. Has AP (apurinic/apyrimidinic) lyase activity and introduces nicks in the DNA strand. Cleaves the DNA backbone by beta-delta elimination to generate a single-strand break at the site of the removed base with both 3'- and 5'-phosphates. In Salmonella paratyphi A (strain AKU_12601), this protein is Endonuclease 8.